We begin with the raw amino-acid sequence, 693 residues long: DNA ligase (693 aa).

NAD(+) is bound by residues 40 to 44 (DSEYD), 89 to 90 (SL), and Glu121. Lys123 serves as the catalytic N6-AMP-lysine intermediate. Positions 144, 179, 295, and 319 each coordinate NAD(+). 4 residues coordinate Zn(2+): Cys413, Cys416, Cys431, and Cys437. A BRCT domain is found at 610–693 (REQNILTGKI…AFIKCLEKEV (84 aa)).

The protein belongs to the NAD-dependent DNA ligase family. LigA subfamily. Mg(2+) is required as a cofactor. Requires Mn(2+) as cofactor.

The catalysed reaction is NAD(+) + (deoxyribonucleotide)n-3'-hydroxyl + 5'-phospho-(deoxyribonucleotide)m = (deoxyribonucleotide)n+m + AMP + beta-nicotinamide D-nucleotide.. DNA ligase that catalyzes the formation of phosphodiester linkages between 5'-phosphoryl and 3'-hydroxyl groups in double-stranded DNA using NAD as a coenzyme and as the energy source for the reaction. It is essential for DNA replication and repair of damaged DNA. The chain is DNA ligase from Rickettsia typhi (strain ATCC VR-144 / Wilmington).